The chain runs to 101 residues: Large ribosomal subunit protein uL24 (101 aa).

This sequence belongs to the universal ribosomal protein uL24 family. Part of the 50S ribosomal subunit.

Its function is as follows. One of two assembly initiator proteins, it binds directly to the 5'-end of the 23S rRNA, where it nucleates assembly of the 50S subunit. In terms of biological role, one of the proteins that surrounds the polypeptide exit tunnel on the outside of the subunit. This Streptococcus sanguinis (strain SK36) protein is Large ribosomal subunit protein uL24.